A 574-amino-acid chain; its full sequence is MCRTLLGVAFLVVTVLSQGEKDLIQNLPGLLFKANFKSYSGYVDANANGTWKMHYMLTESRSNPDTDPLLVWFNGGPGCSSLGGLFEELGPFYVNFDGQTLYENPYAWNAKANVLYLESPIGVGYSYDTTTPGYFQANDDQSAAQNYQALTNFFNVAQPKYTNRTFYLSGESYAGIYIPMLTDLIVQGINNPNQPFPNKNFQGSAIGNGFMNVAGLLNALTLWSAYHGRVSEQNWADIKANCSKGADVDSFDFSQFTTSQNKIDYVGDGSYCGNLIQPLISQNALGNEGFDQYNFYQECYDKSVFQAPPPAGGKRHKRSAMQGVSSVQKNLQYQQLGNFQGTSNLAKNTATLVNRFSNDNQFGYFCWNEDAVSKYLNSDNVQNALNIPQAWKDQKNTWEDCRMSIYNNYTLKYNTTNRFFNNIITNLTTDFRFLIYNGDVDTVCNYLGDAKHILQVAKDNGLTSGPRTPWYYSNNQQLAGYVQTYSGKNKNNAMITIDLLTVKGAGHMVPYDRAGPSVQMISNFVWAPKNVVINYTSQDNFNPNIQLSDLVDSGSSSTVAFFISMFAVLLNIVF.

The first 19 residues, 1-19 (MCRTLLGVAFLVVTVLSQG), serve as a signal peptide directing secretion. 2 N-linked (GlcNAc...) asparagine glycosylation sites follow: asparagine 48 and asparagine 163. The active site involves serine 172. 4 N-linked (GlcNAc...) asparagine glycosylation sites follow: asparagine 241, asparagine 408, asparagine 414, and asparagine 426. Catalysis depends on residues aspartate 441 and histidine 507. N-linked (GlcNAc...) asparagine glycosylation is present at asparagine 534.

This sequence belongs to the peptidase S10 family.

The protein is Serine carboxypeptidase ctsa-3.1 of Caenorhabditis elegans.